The sequence spans 137 residues: Large ribosomal subunit protein uL16 (137 aa).

Belongs to the universal ribosomal protein uL16 family. Part of the 50S ribosomal subunit.

Functionally, binds 23S rRNA and is also seen to make contacts with the A and possibly P site tRNAs. The chain is Large ribosomal subunit protein uL16 from Bradyrhizobium sp. (strain BTAi1 / ATCC BAA-1182).